We begin with the raw amino-acid sequence, 509 residues long: ATP synthase subunit alpha (509 aa).

Residue 169–176 (GDRQTGKT) participates in ATP binding.

Belongs to the ATPase alpha/beta chains family. In terms of assembly, F-type ATPases have 2 components, CF(1) - the catalytic core - and CF(0) - the membrane proton channel. CF(1) has five subunits: alpha(3), beta(3), gamma(1), delta(1), epsilon(1). CF(0) has three main subunits: a(1), b(2) and c(9-12). The alpha and beta chains form an alternating ring which encloses part of the gamma chain. CF(1) is attached to CF(0) by a central stalk formed by the gamma and epsilon chains, while a peripheral stalk is formed by the delta and b chains.

The protein resides in the cell inner membrane. It catalyses the reaction ATP + H2O + 4 H(+)(in) = ADP + phosphate + 5 H(+)(out). Functionally, produces ATP from ADP in the presence of a proton gradient across the membrane. The alpha chain is a regulatory subunit. The polypeptide is ATP synthase subunit alpha (Brucella melitensis biotype 1 (strain ATCC 23456 / CCUG 17765 / NCTC 10094 / 16M)).